Consider the following 565-residue polypeptide: Proline--tRNA ligase (565 aa).

The protein belongs to the class-II aminoacyl-tRNA synthetase family. ProS type 1 subfamily. Homodimer.

It localises to the cytoplasm. The enzyme catalyses tRNA(Pro) + L-proline + ATP = L-prolyl-tRNA(Pro) + AMP + diphosphate. In terms of biological role, catalyzes the attachment of proline to tRNA(Pro) in a two-step reaction: proline is first activated by ATP to form Pro-AMP and then transferred to the acceptor end of tRNA(Pro). As ProRS can inadvertently accommodate and process non-cognate amino acids such as alanine and cysteine, to avoid such errors it has two additional distinct editing activities against alanine. One activity is designated as 'pretransfer' editing and involves the tRNA(Pro)-independent hydrolysis of activated Ala-AMP. The other activity is designated 'posttransfer' editing and involves deacylation of mischarged Ala-tRNA(Pro). The misacylated Cys-tRNA(Pro) is not edited by ProRS. The polypeptide is Proline--tRNA ligase (Lactobacillus johnsonii (strain CNCM I-12250 / La1 / NCC 533)).